The sequence spans 765 residues: Phosphoribosylformylglycinamidine synthase subunit PurL (765 aa).

The active site involves His41. Positions 44 and 83 each coordinate ATP. Glu85 contacts Mg(2+). Residues 86-89 (SHNH) and Arg108 each bind substrate. His87 (proton acceptor) is an active-site residue. Asp109 provides a ligand contact to Mg(2+). Residue Gln232 coordinates substrate. Mg(2+) is bound at residue Asp260. 304–306 (ESQ) is a binding site for substrate. Residues Asp503 and Gly540 each contribute to the ATP site. Asn541 contacts Mg(2+). Ser543 is a binding site for substrate.

Belongs to the FGAMS family. In terms of assembly, monomer. Part of the FGAM synthase complex composed of 1 PurL, 1 PurQ and 2 PurS subunits.

The protein resides in the cytoplasm. It carries out the reaction N(2)-formyl-N(1)-(5-phospho-beta-D-ribosyl)glycinamide + L-glutamine + ATP + H2O = 2-formamido-N(1)-(5-O-phospho-beta-D-ribosyl)acetamidine + L-glutamate + ADP + phosphate + H(+). It participates in purine metabolism; IMP biosynthesis via de novo pathway; 5-amino-1-(5-phospho-D-ribosyl)imidazole from N(2)-formyl-N(1)-(5-phospho-D-ribosyl)glycinamide: step 1/2. In terms of biological role, part of the phosphoribosylformylglycinamidine synthase complex involved in the purines biosynthetic pathway. Catalyzes the ATP-dependent conversion of formylglycinamide ribonucleotide (FGAR) and glutamine to yield formylglycinamidine ribonucleotide (FGAM) and glutamate. The FGAM synthase complex is composed of three subunits. PurQ produces an ammonia molecule by converting glutamine to glutamate. PurL transfers the ammonia molecule to FGAR to form FGAM in an ATP-dependent manner. PurS interacts with PurQ and PurL and is thought to assist in the transfer of the ammonia molecule from PurQ to PurL. The polypeptide is Phosphoribosylformylglycinamidine synthase subunit PurL (Synechococcus sp. (strain WH7803)).